We begin with the raw amino-acid sequence, 285 residues long: Homeobox protein Hox-A13b (285 aa).

The homeobox DNA-binding region spans 219–278; sequence GRKKRVPYTKVQLKELEREYAANKFITKDKRRRISAQTNLTERQVTIWFQNRRVKEKKVV.

The protein belongs to the Abd-B homeobox family.

It localises to the nucleus. Functionally, sequence-specific transcription factor which is part of a developmental regulatory system that provides cells with specific positional identities on the anterior-posterior axis. The chain is Homeobox protein Hox-A13b (hoxa13b) from Takifugu rubripes (Japanese pufferfish).